A 409-amino-acid polypeptide reads, in one-letter code: 4-hydroxy-3-methylbut-2-en-1-yl diphosphate synthase (ferredoxin) (409 aa).

Over residues 1–12 the composition is skewed to polar residues; that stretch reads MQTLDRPNAPTQ. The interval 1 to 22 is disordered; the sequence is MQTLDRPNAPTQQPYPEPVYPR. [4Fe-4S] cluster is bound by residues cysteine 314, cysteine 317, cysteine 348, and glutamate 355.

It belongs to the IspG family. Requires [4Fe-4S] cluster as cofactor.

It carries out the reaction (2E)-4-hydroxy-3-methylbut-2-enyl diphosphate + 2 oxidized [2Fe-2S]-[ferredoxin] + H2O = 2-C-methyl-D-erythritol 2,4-cyclic diphosphate + 2 reduced [2Fe-2S]-[ferredoxin] + H(+). The protein operates within isoprenoid biosynthesis; isopentenyl diphosphate biosynthesis via DXP pathway; isopentenyl diphosphate from 1-deoxy-D-xylulose 5-phosphate: step 5/6. Converts 2C-methyl-D-erythritol 2,4-cyclodiphosphate (ME-2,4cPP) into 1-hydroxy-2-methyl-2-(E)-butenyl 4-diphosphate. The sequence is that of 4-hydroxy-3-methylbut-2-en-1-yl diphosphate synthase (ferredoxin) from Synechococcus sp. (strain JA-2-3B'a(2-13)) (Cyanobacteria bacterium Yellowstone B-Prime).